We begin with the raw amino-acid sequence, 567 residues long: Cytochrome P450 monooxygenase 69 (567 aa).

The chain crosses the membrane as a helical span at residues 7-24 (ELAALTVVLLATGVLFYA). Asn-25, Asn-81, Asn-223, and Asn-279 each carry an N-linked (GlcNAc...) asparagine glycan. A heme-binding site is contributed by Cys-475.

It belongs to the cytochrome P450 family. It depends on heme as a cofactor.

It localises to the membrane. It participates in secondary metabolite biosynthesis. Functionally, cytochrome P450 monooxygenase that is able to use 4-ethoxybenzoic acid as a substrate for oxidation. This chain is Cytochrome P450 monooxygenase 69, found in Postia placenta (strain ATCC 44394 / Madison 698-R) (Brown rot fungus).